Consider the following 177-residue polypeptide: Ribosome rescue factor SmrB (177 aa).

The disordered stretch occupies residues 22-45 (SKKLRQDTIIHQPSKNFSEQQKQR). Positions 30-41 (IIHQPSKNFSEQ) are enriched in polar residues. In terms of domain architecture, Smr spans 98–173 (LDMHGMKQDE…GAGAILVLLS (76 aa)).

The protein belongs to the SmrB family. As to quaternary structure, associates with collided ribosomes, but not with correctly translating polysomes.

Its function is as follows. Acts as a ribosome collision sensor. Detects stalled/collided disomes (pairs of ribosomes where the leading ribosome is stalled and a second ribosome has collided with it) and endonucleolytically cleaves mRNA at the 5' boundary of the stalled ribosome. Stalled/collided disomes form a new interface (primarily via the 30S subunits) that binds SmrB. Cleaved mRNA becomes available for tmRNA ligation, leading to ribosomal subunit dissociation and rescue of stalled ribosomes. The sequence is that of Ribosome rescue factor SmrB from Aliivibrio salmonicida (strain LFI1238) (Vibrio salmonicida (strain LFI1238)).